Here is a 405-residue protein sequence, read N- to C-terminus: Serine-type anaerobic sulfatase-maturating enzyme (405 aa).

The Radical SAM core domain maps to P18–R249. Residues C35 and C39 each coordinate [4Fe-4S] cluster. Y41 provides a ligand contact to S-adenosyl-L-methionine. C42 provides a ligand contact to [4Fe-4S] cluster. Residues G84, S140, and R152 each coordinate S-adenosyl-L-methionine. 3 residues coordinate [4Fe-4S] cluster: C270, C276, and C291. Catalysis depends on D292, which acts as the Proton acceptor. The [4Fe-4S] cluster site is built by C331, C334, C340, C344, and C357.

This sequence belongs to the radical SAM superfamily. Anaerobic sulfatase-maturating enzyme family. Monomer. Interacts with AtsA prior to its export to the periplasm. Requires [4Fe-4S] cluster as cofactor.

The protein localises to the cytoplasm. The enzyme catalyses L-seryl-[sulfatase] + S-adenosyl-L-methionine = 3-oxo-L-alanyl-[sulfatase] + 5'-deoxyadenosine + L-methionine + H(+). It participates in protein modification; sulfatase oxidation. Functionally, involved in 'Ser-type' sulfatase maturation under anaerobic conditions. Catalyzes the post-translational modification of serine ('Ser-72' in the arylsulfatase AtsA) into 3-oxoalanine (also known as C(alpha)-formylglycine (FGly)), by a free radical chemical mechanism initiated via the reductive cleavage of S-adenosyl-L-methionine (SAM). The sequence is that of Serine-type anaerobic sulfatase-maturating enzyme from Klebsiella aerogenes (Enterobacter aerogenes).